We begin with the raw amino-acid sequence, 525 residues long: Probable alpha-galactosidase A (525 aa).

The first 17 residues, 1–17 (MHPSMTLLAILPPLVRA), serve as a signal peptide directing secretion. C40 and C72 are joined by a disulfide. Residues N43, N81, and N117 are each glycosylated (N-linked (GlcNAc...) asparagine). C120 and C150 are oxidised to a cystine. The active-site Nucleophile is the D148. The N-linked (GlcNAc...) asparagine glycan is linked to N197. The Proton donor role is filled by D206. Residues 402–525 (PPDCPMVIPT…GLPSGVDIEA (124 aa)) form the Ricin B-type lectin domain. 2 cysteine pairs are disulfide-bonded: C422–C434 and C459–C472.

It belongs to the glycosyl hydrolase 27 family.

It is found in the secreted. The enzyme catalyses Hydrolysis of terminal, non-reducing alpha-D-galactose residues in alpha-D-galactosides, including galactose oligosaccharides, galactomannans and galactolipids.. Its function is as follows. Hydrolyzes a variety of simple alpha-D-galactoside as well as more complex molecules such as oligosaccharides and polysaccharides. In Aspergillus clavatus (strain ATCC 1007 / CBS 513.65 / DSM 816 / NCTC 3887 / NRRL 1 / QM 1276 / 107), this protein is Probable alpha-galactosidase A (aglA).